A 162-amino-acid polypeptide reads, in one-letter code: NADH-quinone oxidoreductase subunit I (162 aa).

2 4Fe-4S ferredoxin-type domains span residues 54-83 (RRYE…IESE) and 93-122 (TRYD…ETQI). Residues Cys63, Cys66, Cys69, Cys73, Cys102, Cys105, Cys108, and Cys112 each contribute to the [4Fe-4S] cluster site.

Belongs to the complex I 23 kDa subunit family. NDH-1 is composed of 14 different subunits. Subunits NuoA, H, J, K, L, M, N constitute the membrane sector of the complex. The cofactor is [4Fe-4S] cluster.

It is found in the cell inner membrane. It catalyses the reaction a quinone + NADH + 5 H(+)(in) = a quinol + NAD(+) + 4 H(+)(out). Its function is as follows. NDH-1 shuttles electrons from NADH, via FMN and iron-sulfur (Fe-S) centers, to quinones in the respiratory chain. The immediate electron acceptor for the enzyme in this species is believed to be ubiquinone. Couples the redox reaction to proton translocation (for every two electrons transferred, four hydrogen ions are translocated across the cytoplasmic membrane), and thus conserves the redox energy in a proton gradient. This Burkholderia thailandensis (strain ATCC 700388 / DSM 13276 / CCUG 48851 / CIP 106301 / E264) protein is NADH-quinone oxidoreductase subunit I.